The sequence spans 299 residues: Aliphatic sulfonates import ATP-binding protein SsuB (299 aa).

The region spanning 36 to 257 (LHVQQVIKRY…QHGSAAFAQI (222 aa)) is the ABC transporter domain. An ATP-binding site is contributed by 68-75 (GRSGCGKS).

It belongs to the ABC transporter superfamily. Aliphatic sulfonates importer (TC 3.A.1.17.2) family. The complex is composed of two ATP-binding proteins (SsuB), two transmembrane proteins (SsuC) and a solute-binding protein (SsuA).

The protein resides in the cell inner membrane. The catalysed reaction is ATP + H2O + aliphatic sulfonate-[sulfonate-binding protein]Side 1 = ADP + phosphate + aliphatic sulfonateSide 2 + [sulfonate-binding protein]Side 1.. Functionally, part of the ABC transporter complex SsuABC involved in aliphatic sulfonates import. Responsible for energy coupling to the transport system. The protein is Aliphatic sulfonates import ATP-binding protein SsuB of Cupriavidus pinatubonensis (strain JMP 134 / LMG 1197) (Cupriavidus necator (strain JMP 134)).